The primary structure comprises 235 residues: Glycerol-3-phosphate acyltransferase (235 aa).

A run of 6 helical transmembrane segments spans residues 2-22 (FTLI…TSII), 56-76 (TVTI…VVFF), 94-114 (LIAG…GFKG), 126-146 (FGIA…VVFL), 152-172 (VASI…KYLF), and 190-210 (FIHD…AAAI).

The protein belongs to the PlsY family. In terms of assembly, probably interacts with PlsX.

It is found in the cell inner membrane. The enzyme catalyses an acyl phosphate + sn-glycerol 3-phosphate = a 1-acyl-sn-glycero-3-phosphate + phosphate. It functions in the pathway lipid metabolism; phospholipid metabolism. In terms of biological role, catalyzes the transfer of an acyl group from acyl-phosphate (acyl-PO(4)) to glycerol-3-phosphate (G3P) to form lysophosphatidic acid (LPA). This enzyme utilizes acyl-phosphate as fatty acyl donor, but not acyl-CoA or acyl-ACP. This chain is Glycerol-3-phosphate acyltransferase, found in Chlorobium phaeobacteroides (strain BS1).